The primary structure comprises 365 residues: 3-isopropylmalate dehydrogenase (365 aa).

An NAD(+)-binding site is contributed by 78–91; the sequence is GYKWDSLPRSQRPE. 4 residues coordinate substrate: Arg98, Arg108, Arg136, and Asp226. 3 residues coordinate Mg(2+): Asp226, Asp250, and Asp254. Position 284 to 296 (284 to 296) interacts with NAD(+); it reads GSAPDIAGQDKAN.

The protein belongs to the isocitrate and isopropylmalate dehydrogenases family. LeuB type 1 subfamily. As to quaternary structure, homodimer. Mg(2+) serves as cofactor. Mn(2+) is required as a cofactor.

The protein resides in the cytoplasm. It carries out the reaction (2R,3S)-3-isopropylmalate + NAD(+) = 4-methyl-2-oxopentanoate + CO2 + NADH. Its pathway is amino-acid biosynthesis; L-leucine biosynthesis; L-leucine from 3-methyl-2-oxobutanoate: step 3/4. Catalyzes the oxidation of 3-carboxy-2-hydroxy-4-methylpentanoate (3-isopropylmalate) to 3-carboxy-4-methyl-2-oxopentanoate. The product decarboxylates to 4-methyl-2 oxopentanoate. This Synechococcus elongatus (strain ATCC 33912 / PCC 7942 / FACHB-805) (Anacystis nidulans R2) protein is 3-isopropylmalate dehydrogenase.